A 206-amino-acid polypeptide reads, in one-letter code: Acidic proline-rich protein PRP33 (206 aa).

The N-terminal stretch at 1–13 (MLVVLLTAALLVL) is a signal peptide. The tract at residues 15-206 (SAHGSDEEVI…EQPSYLWFSS (192 aa)) is disordered. The span at 55–71 (ENGDGDDSDDGDDDGSG) shows a compositional bias: acidic residues. A run of 6 repeats spans residues 80–97 (PPPH…HHHG), 98–115 (PPPS…NPQG), 116–133 (PPPQ…NPQG), 134–152 (PPPQ…KPQG), 153–170 (PPPQ…NPQG), and 171–189 (PPPQ…KPQD). The segment at 80 to 189 (PPPHGGNHQR…RPPQPRKPQD (110 aa)) is 6 X 18 AA approximate tandem repeats. The segment covering 103-112 (GPQTSSQPGN) has biased composition (low complexity). The segment covering 113 to 174 (PQGPPPQGGP…PGNPQGPPPQ (62 aa)) has biased composition (pro residues).

It is found in the secreted. Its function is as follows. May protect teeth by binding to tannins. The polypeptide is Acidic proline-rich protein PRP33 (Prpg1) (Rattus norvegicus (Rat)).